Here is a 459-residue protein sequence, read N- to C-terminus: Cysteine--tRNA ligase (459 aa).

Cysteine 28 lines the Zn(2+) pocket. Positions 30–40 match the 'HIGH' region motif; it reads ITVYDLCHVGH. Residues cysteine 209, histidine 234, and glutamate 238 each contribute to the Zn(2+) site. The 'KMSKS' region motif lies at 266–270; it reads KMSKS. An ATP-binding site is contributed by lysine 269.

Belongs to the class-I aminoacyl-tRNA synthetase family. In terms of assembly, monomer. Zn(2+) is required as a cofactor.

The protein resides in the cytoplasm. The catalysed reaction is tRNA(Cys) + L-cysteine + ATP = L-cysteinyl-tRNA(Cys) + AMP + diphosphate. This is Cysteine--tRNA ligase (cysS) from Pasteurella multocida (strain Pm70).